A 759-amino-acid polypeptide reads, in one-letter code: uncharacterized protein (759 aa).

Residues 352–556 (VIQKLSDYAF…KDEDIADFSI (205 aa)) form the MCM domain. 397-404 (SDPGVGKS) contributes to the ATP binding site.

The protein belongs to the MCM family.

This is an uncharacterized protein from Methanocaldococcus jannaschii (strain ATCC 43067 / DSM 2661 / JAL-1 / JCM 10045 / NBRC 100440) (Methanococcus jannaschii).